The primary structure comprises 296 residues: 4-hydroxybenzoate octaprenyltransferase (296 aa).

8 helical membrane passes run 22–42 (PIGI…SALG), 46–66 (WIVV…GCVI), 99–121 (LFAG…LVIW), 139–159 (FFAI…PMAY), 163–183 (LGEV…WAVA), 211–231 (FDVA…GGIG), 238–258 (PAFY…YTWI), and 270–290 (FLHN…DFLV).

The protein belongs to the UbiA prenyltransferase family. The cofactor is Mg(2+).

The protein localises to the cell inner membrane. The enzyme catalyses all-trans-octaprenyl diphosphate + 4-hydroxybenzoate = 4-hydroxy-3-(all-trans-octaprenyl)benzoate + diphosphate. Its pathway is cofactor biosynthesis; ubiquinone biosynthesis. Functionally, catalyzes the prenylation of para-hydroxybenzoate (PHB) with an all-trans polyprenyl group. Mediates the second step in the final reaction sequence of ubiquinone-8 (UQ-8) biosynthesis, which is the condensation of the polyisoprenoid side chain with PHB, generating the first membrane-bound Q intermediate 3-octaprenyl-4-hydroxybenzoate. This chain is 4-hydroxybenzoate octaprenyltransferase, found in Dechloromonas aromatica (strain RCB).